Consider the following 263-residue polypeptide: 3-methyl-2-oxobutanoate hydroxymethyltransferase (263 aa).

Positions 45 and 84 each coordinate Mg(2+). 3-methyl-2-oxobutanoate is bound by residues 45–46, Asp-84, and Lys-112; that span reads DS. Mg(2+) is bound at residue Glu-114. The active-site Proton acceptor is Glu-181.

Belongs to the PanB family. Homodecamer; pentamer of dimers. The cofactor is Mg(2+).

It localises to the cytoplasm. It carries out the reaction 3-methyl-2-oxobutanoate + (6R)-5,10-methylene-5,6,7,8-tetrahydrofolate + H2O = 2-dehydropantoate + (6S)-5,6,7,8-tetrahydrofolate. The protein operates within cofactor biosynthesis; (R)-pantothenate biosynthesis; (R)-pantoate from 3-methyl-2-oxobutanoate: step 1/2. Functionally, catalyzes the reversible reaction in which hydroxymethyl group from 5,10-methylenetetrahydrofolate is transferred onto alpha-ketoisovalerate to form ketopantoate. The chain is 3-methyl-2-oxobutanoate hydroxymethyltransferase from Buchnera aphidicola subsp. Acyrthosiphon pisum (strain APS) (Acyrthosiphon pisum symbiotic bacterium).